The following is a 389-amino-acid chain: Serpin-Z3 (389 aa).

The RCL stretch occupies residues 337 to 361 (GTEAAAVSVAIMMPQCLMRNPDFVA).

The protein belongs to the serpin family.

Functionally, probable serine protease inhibitor. The chain is Serpin-Z3 from Arabidopsis thaliana (Mouse-ear cress).